The primary structure comprises 285 residues: GTP cyclohydrolase 1 type 2 homolog (285 aa).

A divalent metal cation is bound by residues H65, H66, D104, H230, and E234.

Belongs to the GTP cyclohydrolase I type 2/NIF3 family. As to quaternary structure, homohexamer.

The sequence is that of GTP cyclohydrolase 1 type 2 homolog from Streptomyces coelicolor (strain ATCC BAA-471 / A3(2) / M145).